Consider the following 342-residue polypeptide: Phosphate acyltransferase (342 aa).

This sequence belongs to the PlsX family. In terms of assembly, homodimer. Probably interacts with PlsY.

The protein localises to the cytoplasm. The enzyme catalyses a fatty acyl-[ACP] + phosphate = an acyl phosphate + holo-[ACP]. The protein operates within lipid metabolism; phospholipid metabolism. Functionally, catalyzes the reversible formation of acyl-phosphate (acyl-PO(4)) from acyl-[acyl-carrier-protein] (acyl-ACP). This enzyme utilizes acyl-ACP as fatty acyl donor, but not acyl-CoA. The chain is Phosphate acyltransferase from Shewanella pealeana (strain ATCC 700345 / ANG-SQ1).